Reading from the N-terminus, the 140-residue chain is Ribosome-binding factor A (140 aa).

Residues 115–140 are disordered; sequence EDERQQRGDIPPGSDQQPGSDEQPTG. Residues 128 to 140 show a composition bias toward polar residues; the sequence is SDQQPGSDEQPTG.

Belongs to the RbfA family. As to quaternary structure, monomer. Binds 30S ribosomal subunits, but not 50S ribosomal subunits or 70S ribosomes.

The protein localises to the cytoplasm. In terms of biological role, one of several proteins that assist in the late maturation steps of the functional core of the 30S ribosomal subunit. Associates with free 30S ribosomal subunits (but not with 30S subunits that are part of 70S ribosomes or polysomes). Required for efficient processing of 16S rRNA. May interact with the 5'-terminal helix region of 16S rRNA. This Synechococcus sp. (strain CC9605) protein is Ribosome-binding factor A.